A 360-amino-acid polypeptide reads, in one-letter code: Protein NDRG2 (360 aa).

The disordered stretch occupies residues Arg-325–Cys-360.

It belongs to the NDRG family.

It localises to the cytoplasm. Its function is as follows. Contributes to the regulation of the Wnt signaling pathway. Down-regulates CTNNB1-mediated transcriptional activation of target genes. May be involved in neuron differentiation. The polypeptide is Protein NDRG2 (Xenopus tropicalis (Western clawed frog)).